The primary structure comprises 478 residues: 7-dehydrocholesterol reductase (478 aa).

Residues 1–28 (MMASDRVRKRHKGSANGAQTVEKEPSKE) form a disordered region. A run of 6 helical transmembrane segments spans residues 43–63 (LSGVILLLCFAPFLVSFFIMA), 97–117 (WAAAKIYAIWVTFQVVLYMCV), 180–200 (WIPLLWCTNILGYAVSTFAFI), 269–289 (VTNSMILVNVLQAVYVVDFFW), 309–329 (LGWGDCVWLPFLYTLQGLYLV), and 333–353 (IQLSTPHAAGVLILGLVGYYI). NADP(+) contacts are provided by residues Lys-361, Arg-365, Met-398, Trp-403, and 410–411 (NY). The chain crosses the membrane as a helical span at residues 424-444 (ACGGNHLLPYFYIIYMTILLV). NADP(+) is bound by residues Asp-450, 454 to 458 (CSNKY), and Tyr-465.

It belongs to the ERG4/ERG24 family.

It localises to the endoplasmic reticulum membrane. It catalyses the reaction cholesterol + NADP(+) = 7-dehydrocholesterol + NADPH + H(+). The catalysed reaction is 7-dehydrodesmosterol + NADPH + H(+) = desmosterol + NADP(+). Its pathway is steroid biosynthesis; cholesterol biosynthesis. Its function is as follows. Catalyzes the last step of the cholesterol synthesis pathway, which transforms cholesta-5,7-dien-3beta-ol (7-dehydrocholesterol,7-DHC) into cholesterol by reducing the C7-C8 double bond of its sterol core. Can also metabolize cholesta-5,7,24-trien-3beta-ol (7-dehydrodemosterol, 7-DHD) to desmosterol, which is then metabolized by the Delta(24)-sterol reductase (DHCR24) to cholesterol. Modulates ferroptosis (a form of regulated cell death driven by iron-dependent lipid peroxidation) through the metabolic breakdown of the anti-ferroptotic metabolites 7-DHC and 7-DHD which, when accumulated, divert the propagation of peroxyl radical-mediated damage from phospholipid components to its sterol core, protecting plasma and mitochondrial membranes from phospholipid autoxidation. This chain is 7-dehydrocholesterol reductase (dhcr7), found in Danio rerio (Zebrafish).